A 263-amino-acid polypeptide reads, in one-letter code: Large ribosomal subunit protein uL23m (263 aa).

The transit peptide at 1–45 (MPRLTVGTKNMLYPLQKTLAVGSCKPEQVPIRSLASVVESSSKIL) directs the protein to the mitochondrion.

Belongs to the universal ribosomal protein uL23 family. As to quaternary structure, component of the mitochondrial large ribosomal subunit (mt-LSU). Mature yeast 74S mitochondrial ribosomes consist of a small (37S) and a large (54S) subunit. The 37S small subunit contains a 15S ribosomal RNA (15S mt-rRNA) and 34 different proteins. The 54S large subunit contains a 21S rRNA (21S mt-rRNA) and 46 different proteins. uL23m forms the wall of the exit tunnel. Interacts with the C-terminus of OXA1.

It localises to the mitochondrion. Component of the mitochondrial ribosome (mitoribosome), a dedicated translation machinery responsible for the synthesis of mitochondrial genome-encoded proteins, including at least some of the essential transmembrane subunits of the mitochondrial respiratory chain. The mitoribosomes are attached to the mitochondrial inner membrane and translation products are cotranslationally integrated into the membrane. This is Large ribosomal subunit protein uL23m (MRP20) from Saccharomyces cerevisiae (strain ATCC 204508 / S288c) (Baker's yeast).